Reading from the N-terminus, the 369-residue chain is Flagellar P-ring protein (369 aa).

The signal sequence occupies residues 1 to 22 (MLNFKHLMAAALLLSTSLGVQA).

It belongs to the FlgI family. The basal body constitutes a major portion of the flagellar organelle and consists of four rings (L,P,S, and M) mounted on a central rod.

The protein resides in the periplasm. It localises to the bacterial flagellum basal body. In terms of biological role, assembles around the rod to form the L-ring and probably protects the motor/basal body from shearing forces during rotation. The chain is Flagellar P-ring protein from Pseudomonas fluorescens (strain ATCC BAA-477 / NRRL B-23932 / Pf-5).